The following is a 410-amino-acid chain: MRYAVYLAPPPASRFWQLGSAWLGRDAWLNRPVALPSGWSAADADRVAAAARYGWHATLRAPFALAEGASEAAVHATLRTLARRFATFGLTLAPATLNGFAALRPVSGQSQVAELATAALLALDALAAPAPLRTGLSAREAELCRRWGYPYVFECYRCHFTLTSQLDEVDIPSWLARAAAHFDGALYQPVEGLALFVEPEAGAAFRLCRLVWLLMAGSTSMRTETGQLIYVMGPSGAGKDSLLGYARERLAGQPLVFAHRYITRPATAGSENHVALSEAEFALREAHGCFALSWRRNGLAYGLGCEVTDWLAAGLVVVVNGSRAALPQARQCFPGLKPLWITASPAVLAARLAARGRESADDIAARLAASAGFRPPADCRVLCNDGELAVAGDELVAWLSSHCHQPITAL.

Residues 1 to 220 (MRYAVYLAPP…VWLLMAGSTS (220 aa)) form a unknown region. A ribose 1,5-bisphosphokinase region spans residues 221 to 410 (MRTETGQLIY…SHCHQPITAL (190 aa)). 233–240 (GPSGAGKD) is an ATP binding site.

It in the C-terminal section; belongs to the ribose 1,5-bisphosphokinase family.

It catalyses the reaction alpha-D-ribose 1,5-bisphosphate + ATP = 5-phospho-alpha-D-ribose 1-diphosphate + ADP. Its pathway is metabolic intermediate biosynthesis; 5-phospho-alpha-D-ribose 1-diphosphate biosynthesis; 5-phospho-alpha-D-ribose 1-diphosphate from D-ribose 5-phosphate (route II): step 3/3. Its function is as follows. Catalyzes the phosphorylation of ribose 1,5-bisphosphate to 5-phospho-D-ribosyl alpha-1-diphosphate (PRPP). In Laribacter hongkongensis (strain HLHK9), this protein is Ribose 1,5-bisphosphate phosphokinase PhnN (phnN).